A 70-amino-acid polypeptide reads, in one-letter code: Palustrin-2ISa (70 aa).

Positions Met1 to Cys22 are cleaved as a signal peptide. A propeptide spans Glu23 to Val39 (removed in mature form). A disulfide bridge links Cys64 with Cys70.

As to expression, expressed by the skin glands.

Its subcellular location is the secreted. Its function is as follows. Has antimicrobial activity against Gram-negative bacterium E.coli ATCC 8739 (MIC=100 ug), against Gram positive bacteria S.aureus ATCC 6538 (MIC=25 ug), methicillin-resistant S.aureus ATCC 43300 (MIC=100 ug), B.subtilis ATCC 6633 (MIC=12.5 ug) and against fungus C.albicans ATCC 90028 (MIC=100 ug). In Odorrana ishikawae (Ishikawa's frog), this protein is Palustrin-2ISa.